A 289-amino-acid chain; its full sequence is Diaminopimelate epimerase (289 aa).

Positions 13, 47, and 67 each coordinate substrate. The active-site Proton donor is the Cys-76. Residues 77-78 (GN), Asn-167, Asn-200, and 218-219 (ER) contribute to the substrate site. Cys-227 serves as the catalytic Proton acceptor. 228 to 229 (GT) lines the substrate pocket.

Belongs to the diaminopimelate epimerase family. Homodimer.

It localises to the cytoplasm. The catalysed reaction is (2S,6S)-2,6-diaminopimelate = meso-2,6-diaminopimelate. Its pathway is amino-acid biosynthesis; L-lysine biosynthesis via DAP pathway; DL-2,6-diaminopimelate from LL-2,6-diaminopimelate: step 1/1. Catalyzes the stereoinversion of LL-2,6-diaminopimelate (L,L-DAP) to meso-diaminopimelate (meso-DAP), a precursor of L-lysine and an essential component of the bacterial peptidoglycan. This is Diaminopimelate epimerase from Burkholderia pseudomallei (strain K96243).